The chain runs to 635 residues: Sodium- and chloride-dependent creatine transporter 1 (635 aa).

Residues 1 to 35 form a disordered region; that stretch reads MAKKSAENGIYSVSGDEKKGPLIAPGPDGAPAKGD. Over 1 to 60 the chain is Cytoplasmic; sequence MAKKSAENGIYSVSGDEKKGPLIAPGPDGAPAKGDGPAGLGAPGGCLAVPPRETWTRQMD. The segment covering 25-35 has biased composition (low complexity); sequence PGPDGAPAKGD. Residues 61–81 form a helical membrane-spanning segment; sequence FIMSCVGFAVGLGNVWRFPYL. Topologically, residues 82–87 are extracellular; it reads CYKNGG. A helical membrane pass occupies residues 88-108; that stretch reads GVFLIPYVLIALVGGIPIFFL. Residues 109–138 lie on the Cytoplasmic side of the membrane; the sequence is EISLGQFMKAGSINVWNICPLFKGLGYASM. A helical transmembrane segment spans residues 139-159; the sequence is VIVFYCNTYYIMVLAWGFYYL. The Extracellular segment spans residues 160–230; it reads VKSFTTTLPW…LSGGLEVPGA (71 aa). Asn192 and Asn197 each carry an N-linked (GlcNAc...) asparagine glycan. Residues 231–251 traverse the membrane as a helical segment; it reads LNSEVTLCLLACWVLVYFCVW. Residues 252–269 are Cytoplasmic-facing; the sequence is KGVKSTGKIVYFTATFPY. The chain crosses the membrane as a helical span at residues 270–290; sequence VVLVVLLVRGVLLPGALDGII. The Extracellular segment spans residues 291-304; the sequence is YYLKPDWSKLRSPQ. The helical transmembrane segment at 305-325 threads the bilayer; sequence VWIDAGTQIFFSYAIGLGALT. Residues 326–341 lie on the Cytoplasmic side of the membrane; the sequence is ALGSYNRFNNNCYKDA. Residues 342–362 form a helical membrane-spanning segment; that stretch reads IILALINSGTSFFAGFVVFSI. At 363 to 394 the chain is on the extracellular side; the sequence is LGFMATEQGVHISKVAESGPGLAFIAYPRAVT. Residues 395–415 form a helical membrane-spanning segment; that stretch reads LMPVAPLWAALFFFMLLLLGL. Over 416–444 the chain is Cytoplasmic; that stretch reads DSQFVGVEGFITGLLDLLPASYYFRFQRE. A helical membrane pass occupies residues 445-465; it reads ISVALCCALCFVIDLSMVQMA. The Extracellular segment spans residues 466 to 479; the sequence is GMYVFQLFDYYSAS. The helical transmembrane segment at 480 to 500 threads the bilayer; it reads GTTLLWQAFWECVAVAWVYGA. Residues 501 to 520 lie on the Cytoplasmic side of the membrane; that stretch reads DRFMDDIACMIGYRPCPWMK. Residues 521–541 form a helical membrane-spanning segment; it reads WCWSFFTPLVCMGIFIFNIVY. The Extracellular portion of the chain corresponds to 542 to 560; sequence YKPLVYNKTYVYPWWGEAM. Asn548 carries N-linked (GlcNAc...) asparagine glycosylation. Residues 561-581 form a helical membrane-spanning segment; it reads GWAFALSSMLCVPLHLLGCLL. Residues 582–635 are Cytoplasmic-facing; the sequence is RAKGTMAERWQHLTQPVWGLHHLEYRAQDADVRGLTTLTPVSESSKVVVVESVM. Phosphothreonine occurs at positions 617 and 620. Ser623 carries the phosphoserine modification.

This sequence belongs to the sodium:neurotransmitter symporter (SNF) (TC 2.A.22) family. SLC6A8 subfamily. In terms of processing, glycosylated. Prominent in kidney, heart, and muscle, also present in brain, but not in liver and intestine.

It localises to the cell membrane. The protein localises to the apical cell membrane. The enzyme catalyses creatine(out) + chloride(out) + 2 Na(+)(out) = creatine(in) + chloride(in) + 2 Na(+)(in). Creatine:sodium symporter which mediates the uptake of creatine. Plays an important role in supplying creatine to the brain via the blood-brain barrier. This Oryctolagus cuniculus (Rabbit) protein is Sodium- and chloride-dependent creatine transporter 1 (SLC6A8).